We begin with the raw amino-acid sequence, 354 residues long: Selenide, water dikinase (354 aa).

C23 is a catalytic residue. Residues K26 and 54-56 (TSD) contribute to the ATP site. D57 contacts Mg(2+). ATP-binding positions include D74, D97, and 145-147 (GHS). Position 97 (D97) interacts with Mg(2+). A Mg(2+)-binding site is contributed by D233.

It belongs to the selenophosphate synthase 1 family. Class I subfamily. Homodimer. It depends on Mg(2+) as a cofactor.

It catalyses the reaction hydrogenselenide + ATP + H2O = selenophosphate + AMP + phosphate + 2 H(+). Synthesizes selenophosphate from selenide and ATP. The sequence is that of Selenide, water dikinase from Burkholderia pseudomallei (strain K96243).